Reading from the N-terminus, the 404-residue chain is LL-diaminopimelate aminotransferase (404 aa).

Residues Y15 and G42 each contribute to the substrate site. Residues Y72, A108–K109, Y132, N188, Y219, and S247–S249 contribute to the pyridoxal 5'-phosphate site. Residues K109, Y132, and N188 each coordinate substrate. K250 bears the N6-(pyridoxal phosphate)lysine mark. Residues R258 and N288 each coordinate pyridoxal 5'-phosphate. Substrate-binding residues include N288 and R384.

The protein belongs to the class-I pyridoxal-phosphate-dependent aminotransferase family. LL-diaminopimelate aminotransferase subfamily. Homodimer. The cofactor is pyridoxal 5'-phosphate.

The catalysed reaction is (2S,6S)-2,6-diaminopimelate + 2-oxoglutarate = (S)-2,3,4,5-tetrahydrodipicolinate + L-glutamate + H2O + H(+). The protein operates within amino-acid biosynthesis; L-lysine biosynthesis via DAP pathway; LL-2,6-diaminopimelate from (S)-tetrahydrodipicolinate (aminotransferase route): step 1/1. In terms of biological role, involved in the synthesis of meso-diaminopimelate (m-DAP or DL-DAP), required for both lysine and peptidoglycan biosynthesis. Catalyzes the direct conversion of tetrahydrodipicolinate to LL-diaminopimelate. The chain is LL-diaminopimelate aminotransferase from Lachnospira eligens (strain ATCC 27750 / DSM 3376 / VPI C15-48 / C15-B4) (Eubacterium eligens).